The sequence spans 125 residues: Phosphoribosyl-AMP cyclohydrolase (125 aa).

Asp-74 lines the Mg(2+) pocket. Cys-75 is a Zn(2+) binding site. The Mg(2+) site is built by Asp-76 and Asp-78. Residues Cys-92 and Cys-99 each contribute to the Zn(2+) site.

It belongs to the PRA-CH family. As to quaternary structure, homodimer. Requires Mg(2+) as cofactor. It depends on Zn(2+) as a cofactor.

Its subcellular location is the cytoplasm. It catalyses the reaction 1-(5-phospho-beta-D-ribosyl)-5'-AMP + H2O = 1-(5-phospho-beta-D-ribosyl)-5-[(5-phospho-beta-D-ribosylamino)methylideneamino]imidazole-4-carboxamide. It participates in amino-acid biosynthesis; L-histidine biosynthesis; L-histidine from 5-phospho-alpha-D-ribose 1-diphosphate: step 3/9. Functionally, catalyzes the hydrolysis of the adenine ring of phosphoribosyl-AMP. The protein is Phosphoribosyl-AMP cyclohydrolase of Syntrophotalea carbinolica (strain DSM 2380 / NBRC 103641 / GraBd1) (Pelobacter carbinolicus).